A 1049-amino-acid polypeptide reads, in one-letter code: Dyslexia-associated protein KIAA0319-like protein (1049 aa).

The Cytoplasmic portion of the chain corresponds to 1-29; it reads MEKRLGVKPNPASWILSGYYWQTSAKWLR. Residues 30–50 traverse the membrane as a helical segment; sequence TLYLFYTCFCFSVLWLSTDAS. An MANSC domain is found at 49–127; the sequence is ASESRCQQGK…AFRTHSSNSM (79 aa). Over 51–932 the chain is Extracellular; it reads ESRCQQGKTQ…ESNCEWSVLY (882 aa). The disordered stretch occupies residues 234–277; sequence TTDLTAELPGGPKNVSAQPEIPEGLATTPSTQQVKSSEKTQIAV. Asn247, Asn395, and Asn487 each carry an N-linked (GlcNAc...) asparagine glycan. 5 PKD domains span residues 310-401, 409-498, 504-594, 600-688, and 694-785; these read VVSA…VKPE, IAIV…VNKA, VANA…VQPE, QADA…VKEE, and IAKI…VKPD. A helical transmembrane segment spans residues 933-953; that stretch reads VIIATFVIVVALGILSWTVIC. The Cytoplasmic portion of the chain corresponds to 954 to 1049; the sequence is CCKRQKGKPK…KARSPREEIL (96 aa). Thr974 bears the Phosphothreonine mark. A phosphoserine mark is found at Ser978, Ser1009, and Ser1031. The segment at 1022-1049 is disordered; it reads GKLLHGQNGSVPNGQTPLKARSPREEIL. Residues 1028-1037 show a composition bias toward polar residues; the sequence is QNGSVPNGQT. Phosphothreonine is present on Thr1037.

Interacts with RTN4R. N-glycosylated.

The protein localises to the cytoplasmic granule membrane. The protein resides in the golgi apparatus membrane. It is found in the golgi apparatus. It localises to the trans-Golgi network membrane. Its subcellular location is the cell membrane. Its function is as follows. Possible role in axon guidance through interaction with RTN4R. The sequence is that of Dyslexia-associated protein KIAA0319-like protein from Pongo abelii (Sumatran orangutan).